The chain runs to 83 residues: Retinal cone rhodopsin-sensitive cGMP 3',5'-cyclic phosphodiesterase subunit gamma (83 aa).

The span at 1 to 19 shows a compositional bias: low complexity; sequence MSDNTTLAPPAASQAPATP. Positions 1–51 are disordered; it reads MSDNTTLAPPAASQAPATPRKGPPKFKQRQTRQFKSKPPKKGVKGFGDDIP. Over residues 22–43 the composition is skewed to basic residues; it reads GPPKFKQRQTRQFKSKPPKKGV.

The protein belongs to the rod/cone cGMP-PDE gamma subunit family. Tetramer composed of two catalytic chains (alpha and beta), and two inhibitory chains (gamma).

It catalyses the reaction 3',5'-cyclic GMP + H2O = GMP + H(+). Participates in processes of transmission and amplification of the visual signal. cGMP-PDEs are the effector molecules in G-protein-mediated phototransduction in vertebrate rods and cones. This chain is Retinal cone rhodopsin-sensitive cGMP 3',5'-cyclic phosphodiesterase subunit gamma (PDE6H), found in Ictidomys tridecemlineatus (Thirteen-lined ground squirrel).